Reading from the N-terminus, the 187-residue chain is Elongation factor P (187 aa).

This sequence belongs to the elongation factor P family.

The protein localises to the cytoplasm. It functions in the pathway protein biosynthesis; polypeptide chain elongation. In terms of biological role, involved in peptide bond synthesis. Stimulates efficient translation and peptide-bond synthesis on native or reconstituted 70S ribosomes in vitro. Probably functions indirectly by altering the affinity of the ribosome for aminoacyl-tRNA, thus increasing their reactivity as acceptors for peptidyl transferase. This chain is Elongation factor P, found in Chelativorans sp. (strain BNC1).